Consider the following 235-residue polypeptide: uncharacterized protein (235 aa).

The protein to B.subtilis YncM.

This is an uncharacterized protein from Bacillus subtilis (strain 168).